A 395-amino-acid chain; its full sequence is Cyclin-A2 (395 aa).

Residues 1–93 are disordered; sequence MLAEQENQEN…EEAADAPGLR (93 aa). Residues 27–60 show a composition bias toward low complexity; the sequence is ALGLLRGGPARPGPAAQAARNGEGRGAAAGQQQQ.

The protein belongs to the cyclin family. Cyclin AB subfamily. As to quaternary structure, interacts with the CDK1 and CDK2 protein kinases to form serine/threonine kinase holoenzyme complexes.

Its subcellular location is the nucleus. The protein resides in the cytoplasm. Functionally, cyclin which controls both the G1/S and the G2/M transition phases of the cell cycle. Functions through the formation of specific serine/threonine kinase holoenzyme complexes with the cyclin-dependent protein kinases CDK1 and CDK2. The cyclin subunit confers the substrate specificity of these complexes and differentially interacts with and activates CDK1 and CDK2 throughout the cell cycle. This Gallus gallus (Chicken) protein is Cyclin-A2.